Consider the following 577-residue polypeptide: Adenine deaminase (577 aa).

This sequence belongs to the metallo-dependent hydrolases superfamily. Adenine deaminase family. Requires Mn(2+) as cofactor.

It carries out the reaction adenine + H2O + H(+) = hypoxanthine + NH4(+). This is Adenine deaminase from Geobacillus kaustophilus (strain HTA426).